The following is an 89-amino-acid chain: UPF0223 protein BCE_4008 (89 aa).

Belongs to the UPF0223 family.

This is UPF0223 protein BCE_4008 from Bacillus cereus (strain ATCC 10987 / NRS 248).